The primary structure comprises 131 residues: Small ribosomal subunit protein uS8 (131 aa).

It belongs to the universal ribosomal protein uS8 family. Part of the 30S ribosomal subunit. Contacts proteins S5 and S12.

In terms of biological role, one of the primary rRNA binding proteins, it binds directly to 16S rRNA central domain where it helps coordinate assembly of the platform of the 30S subunit. The polypeptide is Small ribosomal subunit protein uS8 (Rhizorhabdus wittichii (strain DSM 6014 / CCUG 31198 / JCM 15750 / NBRC 105917 / EY 4224 / RW1) (Sphingomonas wittichii)).